The primary structure comprises 550 residues: Dihydroxy-acid dehydratase (550 aa).

D78 contacts Mg(2+). C119 lines the [2Fe-2S] cluster pocket. Mg(2+)-binding residues include D120 and K121. K121 carries the N6-carboxylysine modification. A [2Fe-2S] cluster-binding site is contributed by C191. E440 provides a ligand contact to Mg(2+). S466 acts as the Proton acceptor in catalysis.

Belongs to the IlvD/Edd family. In terms of assembly, homodimer. [2Fe-2S] cluster is required as a cofactor. Mg(2+) serves as cofactor.

The enzyme catalyses (2R)-2,3-dihydroxy-3-methylbutanoate = 3-methyl-2-oxobutanoate + H2O. The catalysed reaction is (2R,3R)-2,3-dihydroxy-3-methylpentanoate = (S)-3-methyl-2-oxopentanoate + H2O. The protein operates within amino-acid biosynthesis; L-isoleucine biosynthesis; L-isoleucine from 2-oxobutanoate: step 3/4. Its pathway is amino-acid biosynthesis; L-valine biosynthesis; L-valine from pyruvate: step 3/4. Its function is as follows. Functions in the biosynthesis of branched-chain amino acids. Catalyzes the dehydration of (2R,3R)-2,3-dihydroxy-3-methylpentanoate (2,3-dihydroxy-3-methylvalerate) into 2-oxo-3-methylpentanoate (2-oxo-3-methylvalerate) and of (2R)-2,3-dihydroxy-3-methylbutanoate (2,3-dihydroxyisovalerate) into 2-oxo-3-methylbutanoate (2-oxoisovalerate), the penultimate precursor to L-isoleucine and L-valine, respectively. In Methanococcus maripaludis (strain C6 / ATCC BAA-1332), this protein is Dihydroxy-acid dehydratase.